The chain runs to 229 residues: Mediator of RNA polymerase II transcription subunit 7 (229 aa).

It belongs to the Mediator complex subunit 7 family. In terms of assembly, component of the Mediator complex.

The protein resides in the nucleus. Component of the Mediator complex, a coactivator involved in the regulated transcription of nearly all RNA polymerase II-dependent genes. Mediator functions as a bridge to convey information from gene-specific regulatory proteins to the basal RNA polymerase II transcription machinery. Mediator is recruited to promoters by direct interactions with regulatory proteins and serves as a scaffold for the assembly of a functional preinitiation complex with RNA polymerase II and the general transcription factors. This Xenopus tropicalis (Western clawed frog) protein is Mediator of RNA polymerase II transcription subunit 7 (med7).